A 307-amino-acid polypeptide reads, in one-letter code: Ribosomal RNA small subunit methyltransferase H (307 aa).

S-adenosyl-L-methionine is bound by residues 32-34 (GGH), D52, F78, D100, and Q107.

It belongs to the methyltransferase superfamily. RsmH family.

It localises to the cytoplasm. It carries out the reaction cytidine(1402) in 16S rRNA + S-adenosyl-L-methionine = N(4)-methylcytidine(1402) in 16S rRNA + S-adenosyl-L-homocysteine + H(+). Functionally, specifically methylates the N4 position of cytidine in position 1402 (C1402) of 16S rRNA. In Coxiella burnetii (strain CbuK_Q154) (Coxiella burnetii (strain Q154)), this protein is Ribosomal RNA small subunit methyltransferase H.